The chain runs to 480 residues: Aspartyl/glutamyl-tRNA(Asn/Gln) amidotransferase subunit B (480 aa).

The protein belongs to the GatB/GatE family. GatB subfamily. As to quaternary structure, heterotrimer of A, B and C subunits.

It carries out the reaction L-glutamyl-tRNA(Gln) + L-glutamine + ATP + H2O = L-glutaminyl-tRNA(Gln) + L-glutamate + ADP + phosphate + H(+). The enzyme catalyses L-aspartyl-tRNA(Asn) + L-glutamine + ATP + H2O = L-asparaginyl-tRNA(Asn) + L-glutamate + ADP + phosphate + 2 H(+). Allows the formation of correctly charged Asn-tRNA(Asn) or Gln-tRNA(Gln) through the transamidation of misacylated Asp-tRNA(Asn) or Glu-tRNA(Gln) in organisms which lack either or both of asparaginyl-tRNA or glutaminyl-tRNA synthetases. The reaction takes place in the presence of glutamine and ATP through an activated phospho-Asp-tRNA(Asn) or phospho-Glu-tRNA(Gln). In Streptococcus pneumoniae (strain ATCC 700669 / Spain 23F-1), this protein is Aspartyl/glutamyl-tRNA(Asn/Gln) amidotransferase subunit B.